A 233-amino-acid polypeptide reads, in one-letter code: Phosphoribosylformylglycinamidine synthase subunit PurQ (233 aa).

The Glutamine amidotransferase type-1 domain occupies 3-233 (AAILVFPGIN…GLAQHLEKAA (231 aa)). Catalysis depends on C87, which acts as the Nucleophile. Catalysis depends on residues H204 and E206.

As to quaternary structure, part of the FGAM synthase complex composed of 1 PurL, 1 PurQ and 2 PurS subunits.

It localises to the cytoplasm. The catalysed reaction is N(2)-formyl-N(1)-(5-phospho-beta-D-ribosyl)glycinamide + L-glutamine + ATP + H2O = 2-formamido-N(1)-(5-O-phospho-beta-D-ribosyl)acetamidine + L-glutamate + ADP + phosphate + H(+). It catalyses the reaction L-glutamine + H2O = L-glutamate + NH4(+). Its pathway is purine metabolism; IMP biosynthesis via de novo pathway; 5-amino-1-(5-phospho-D-ribosyl)imidazole from N(2)-formyl-N(1)-(5-phospho-D-ribosyl)glycinamide: step 1/2. In terms of biological role, part of the phosphoribosylformylglycinamidine synthase complex involved in the purines biosynthetic pathway. Catalyzes the ATP-dependent conversion of formylglycinamide ribonucleotide (FGAR) and glutamine to yield formylglycinamidine ribonucleotide (FGAM) and glutamate. The FGAM synthase complex is composed of three subunits. PurQ produces an ammonia molecule by converting glutamine to glutamate. PurL transfers the ammonia molecule to FGAR to form FGAM in an ATP-dependent manner. PurS interacts with PurQ and PurL and is thought to assist in the transfer of the ammonia molecule from PurQ to PurL. The sequence is that of Phosphoribosylformylglycinamidine synthase subunit PurQ from Bradyrhizobium diazoefficiens (strain JCM 10833 / BCRC 13528 / IAM 13628 / NBRC 14792 / USDA 110).